We begin with the raw amino-acid sequence, 53 residues long: Sec-independent protein translocase protein TatA (53 aa).

The helical transmembrane segment at 1-21 threads the bilayer; the sequence is MGMSLSHLLIVLLIIFVLFGA.

Belongs to the TatA/E family. As to quaternary structure, the Tat system comprises two distinct complexes: a TatABC complex, containing multiple copies of TatA, TatB and TatC subunits, and a separate TatA complex, containing only TatA subunits. Substrates initially bind to the TatABC complex, which probably triggers association of the separate TatA complex to form the active translocon.

It is found in the cell inner membrane. In terms of biological role, part of the twin-arginine translocation (Tat) system that transports large folded proteins containing a characteristic twin-arginine motif in their signal peptide across membranes. TatA could form the protein-conducting channel of the Tat system. The polypeptide is Sec-independent protein translocase protein TatA (Rickettsia conorii (strain ATCC VR-613 / Malish 7)).